The chain runs to 250 residues: 3-deoxy-manno-octulosonate cytidylyltransferase 1 (250 aa).

This sequence belongs to the KdsB family.

Its subcellular location is the cytoplasm. It carries out the reaction 3-deoxy-alpha-D-manno-oct-2-ulosonate + CTP = CMP-3-deoxy-beta-D-manno-octulosonate + diphosphate. Its pathway is nucleotide-sugar biosynthesis; CMP-3-deoxy-D-manno-octulosonate biosynthesis; CMP-3-deoxy-D-manno-octulosonate from 3-deoxy-D-manno-octulosonate and CTP: step 1/1. It participates in bacterial outer membrane biogenesis; lipopolysaccharide biosynthesis. Activates KDO (a required 8-carbon sugar) for incorporation into bacterial lipopolysaccharide in Gram-negative bacteria. This is 3-deoxy-manno-octulosonate cytidylyltransferase 1 from Actinobacillus pleuropneumoniae serotype 5b (strain L20).